The primary structure comprises 247 residues: tRNA (guanine-N(1)-)-methyltransferase (247 aa).

S-adenosyl-L-methionine is bound by residues Gly-116 and 135 to 140; that span reads IGDYVL.

Belongs to the RNA methyltransferase TrmD family. In terms of assembly, homodimer.

Its subcellular location is the cytoplasm. It catalyses the reaction guanosine(37) in tRNA + S-adenosyl-L-methionine = N(1)-methylguanosine(37) in tRNA + S-adenosyl-L-homocysteine + H(+). Specifically methylates guanosine-37 in various tRNAs. This chain is tRNA (guanine-N(1)-)-methyltransferase, found in Symbiobacterium thermophilum (strain DSM 24528 / JCM 14929 / IAM 14863 / T).